Consider the following 298-residue polypeptide: KH domain-containing protein At1g09660/At1g09670 (298 aa).

The region spanning 152–219 (DVPVDKYPSY…EHLCEPLHVL (68 aa)) is the KH domain. Residues 266–298 (NGTLREESPSPSLSPCLSPSMSPFNSKRAKTEI) form a disordered region. 2 positions are modified to phosphoserine: Ser-273 and Ser-287. The segment covering 274–288 (PSPSLSPCLSPSMSP) has biased composition (low complexity).

It localises to the nucleus. The sequence is that of KH domain-containing protein At1g09660/At1g09670 from Arabidopsis thaliana (Mouse-ear cress).